An 850-amino-acid polypeptide reads, in one-letter code: Protein SEY1 (850 aa).

A disordered region spans residues Met1–Pro27. Residues Met1–His741 lie on the Cytoplasmic side of the membrane. The segment covering Glu12–Pro27 has biased composition (low complexity). The 234-residue stretch at Asn64–Tyr297 folds into the GB1/RHD3-type G domain. Residue Gly74–Ser81 coordinates GTP. The helical transmembrane segment at Ile742–Leu762 threads the bilayer. Over Arg763–Pro765 the chain is Lumenal. The helical transmembrane segment at Phe766 to Leu786 threads the bilayer. The Cytoplasmic segment spans residues Leu787–Ser850. A disordered region spans residues Gln816–Ser850.

It belongs to the TRAFAC class dynamin-like GTPase superfamily. GB1/RHD3 GTPase family. RHD3 subfamily.

The protein localises to the endoplasmic reticulum membrane. Functionally, cooperates with the reticulon proteins and tubule-shaping DP1 family proteins to generate and maintain the structure of the tubular endoplasmic reticulum network. Has GTPase activity, which is required for its function in ER organization. The sequence is that of Protein SEY1 from Meyerozyma guilliermondii (strain ATCC 6260 / CBS 566 / DSM 6381 / JCM 1539 / NBRC 10279 / NRRL Y-324) (Yeast).